The following is a 161-amino-acid chain: uncharacterized protein (161 aa).

The tract at residues Thr126–His161 is disordered. Low complexity predominate over residues Ser128 to Ser148.

It belongs to the herpesviridae US1 family.

This is an uncharacterized protein from Human cytomegalovirus (strain AD169) (HHV-5).